The primary structure comprises 363 residues: MNELLLNLVDPLHQWFLGLGDGGVVLWSVLKILLIAVPVIVSVAFYVVWERKLIGWMHVRHGPMYVGMGIFQAFADVFKLLFKEILQPSSSHKAMFIIAPLLTLAPAFAAWSVVPFDAKLVLSNANVGLLYLLAMTSLGVYGIILAGWASNSKYAFLGAMRSAAQVVSYEIAMGFALVGVMIASGSVNLSQIVFAQAGNSGFFDWFLIPLFPLFIVYWVSGVAETNRAPFDVVEGESEIVAGHMVEYSGGAFALFFLAEYANMILVSFLISIFFFGGWLSPIQGWVNADISPWIDWLWKGGWPWLLMKVFFFASAYIWFRASFPRYRYDQIMRLGWKVFIPLTIVWIAVTALMVFYGVIQKGV.

10 helical membrane-spanning segments follow: residues valine 29 to tryptophan 49, glycine 62 to phenylalanine 82, phenylalanine 96 to phenylalanine 116, valine 127 to glycine 147, alanine 163 to alanine 183, phenylalanine 202 to valine 222, glutamate 238 to leucine 257, tryptophan 278 to tryptophan 298, lysine 299 to phenylalanine 319, and phenylalanine 339 to isoleucine 359.

Belongs to the complex I subunit 1 family. In terms of assembly, NDH-1 is composed of 14 different subunits. Subunits NuoA, H, J, K, L, M, N constitute the membrane sector of the complex.

Its subcellular location is the cell inner membrane. The enzyme catalyses a quinone + NADH + 5 H(+)(in) = a quinol + NAD(+) + 4 H(+)(out). Functionally, NDH-1 shuttles electrons from NADH, via FMN and iron-sulfur (Fe-S) centers, to quinones in the respiratory chain. The immediate electron acceptor for the enzyme in this species is believed to be ubiquinone. Couples the redox reaction to proton translocation (for every two electrons transferred, four hydrogen ions are translocated across the cytoplasmic membrane), and thus conserves the redox energy in a proton gradient. This subunit may bind ubiquinone. The sequence is that of NADH-quinone oxidoreductase subunit H from Xanthomonas oryzae pv. oryzae (strain MAFF 311018).